A 70-amino-acid polypeptide reads, in one-letter code: Large ribosomal subunit protein eL38 (70 aa).

K4 is covalently cross-linked (Glycyl lysine isopeptide (Lys-Gly) (interchain with G-Cter in SUMO2)). An N6-acetyllysine; alternate modification is found at K9. Residue K9 forms a Glycyl lysine isopeptide (Lys-Gly) (interchain with G-Cter in SUMO2); alternate linkage. N6-acetyllysine is present on K67.

Belongs to the eukaryotic ribosomal protein eL38 family. In terms of assembly, component of the large ribosomal subunit.

The protein resides in the cytoplasm. Component of the large ribosomal subunit. The ribosome is a large ribonucleoprotein complex responsible for the synthesis of proteins in the cell. This chain is Large ribosomal subunit protein eL38 (RPL38), found in Homo sapiens (Human).